The sequence spans 452 residues: Peptidase M20 domain-containing protein SMAC_03666.2 (452 aa).

Positions 1–28 (MKATSNLLLLWGTSLLSPSSAFVIDNHH) are cleaved as a signal peptide. The N-linked (GlcNAc...) asparagine glycan is linked to N140. D186 is a Zn(2+) binding site. E220 (proton acceptor) is an active-site residue. Residue E221 coordinates Zn(2+). N-linked (GlcNAc...) asparagine glycosylation occurs at N315.

This sequence belongs to the peptidase M20A family. Zn(2+) is required as a cofactor.

The protein resides in the secreted. The chain is Peptidase M20 domain-containing protein SMAC_03666.2 from Sordaria macrospora (strain ATCC MYA-333 / DSM 997 / K(L3346) / K-hell).